Reading from the N-terminus, the 787-residue chain is METQLQNDQLFLEWFGQNLLDCHFAQNVSVYLQDASMVHFKTFSEQIKIIRAPMGSGKTSALIEFLKTVSYIDSVLVISCRKTFAAELLNRFKKNDLNDFYLYSEIKERQINKNKLIIQVESLHRVTRNYHVLILDEIMSIIKQFYSKTMTKVKEVDAKLLTLIRNSTQIVAMDATVNRYVVDFFSLCMPHFKSALIINTFVSANFSNRSAYFCPTFIDGNLAFYGILKQKLGLGKNICLFCSTVTSADFMSELLKTDFPDKKILLLTSKQGKCHSVESWINYNIVIYTSIVTVGLSFDFLHFSAMFVYIHLVKGGPDMVSVFQSMGRVRKVTDNEIFIYLNPALIQVPLSVSPISIPQCYDWTLFEKSILQCSCMDFNKKCLSAQNYLSNSMIKQFFRIRHYIEKTTLLNLPDSLYLLCLLLDSNSIKVHIDGDVFPIAKEKFYAFTKMLVQGCHFFEKKKTDFVENTMTLKELFSNTNITVNGEFYELGNFQVHKDYIVNLNNFQNLFLKNDVDIFVIEEIMLTLKSEIRRFVFINALLQKYVATGIDVEKIKAFFKSRIKTFTLPENYICSKFYLLSDISGVHECGMLMDVAFLAESIRADLNLQSCTDTQTDISEDAILLCAARRSSEILRILQIVFTTHVQLFEKYNSYTLYLFNRLKGMQLNTWSLSIAKFSVSIIRMFFKCAFNMNLVKSKPRYIVGKPFRSLTKREIETLLDMWHVSRTNLKTYKELRKALTEASKKRQRKKIYKLLGHNISSYISETGCLFQHADAGMCLSSGCLLRS.

The 157-residue stretch at 39 to 195 (HFKTFSEQIK…SLCMPHFKSA (157 aa)) folds into the Helicase ATP-binding domain. 52–59 (APMGSGKT) provides a ligand contact to ATP.

Belongs to the herpesviridae OriBP family.

Functionally, probably involved in DNA replication. Binds the origin of replication (ori). The protein is Replication origin-binding protein (U73) of Human herpesvirus 7 (strain JI) (HHV-7).